Reading from the N-terminus, the 167-residue chain is Kininogen-1 (167 aa).

A signal peptide spans 1-23; the sequence is MRLWFCLSFFIILCLEHFPGTLA.

It belongs to the bradykinin-related peptide family. Expressed by the skin glands.

It localises to the secreted. In terms of biological role, vasodilator. Bradykinin produces in vitro relaxation of rat arterial smooth muscle and constriction of intestinal smooth muscle. May target bradykinin receptors (BDKRB). The sequence is that of Kininogen-1 from Bombina orientalis (Oriental fire-bellied toad).